Here is a 348-residue protein sequence, read N- to C-terminus: tRNA (cytosine(34)-C(5))-methyltransferase, mitochondrial (348 aa).

S-adenosyl-L-methionine-binding positions include 139–145 (CAAPGGK), glutamate 162, aspartate 193, and aspartate 211. The Nucleophile role is filled by cysteine 265.

Belongs to the class I-like SAM-binding methyltransferase superfamily. RsmB/NOP family.

Its subcellular location is the mitochondrion matrix. The enzyme catalyses cytidine(34) in mitochondrial tRNA + S-adenosyl-L-methionine = 5-methylcytidine(34) in mitochondrial tRNA + S-adenosyl-L-homocysteine + H(+). In terms of biological role, mitochondrial tRNA methyltransferase that mediates methylation of cytosine to 5-methylcytosine (m5C) at position 34 of mt-tRNA(Met). mt-tRNA(Met) methylation at cytosine(34) takes place at the wobble position of the anticodon and initiates the formation of 5-formylcytosine (f(5)c) at this position. mt-tRNA(Met) containing the f(5)c modification at the wobble position enables recognition of the AUA codon in addition to the AUG codon, expanding codon recognition in mitochondrial translation. This is tRNA (cytosine(34)-C(5))-methyltransferase, mitochondrial from Mus musculus (Mouse).